A 163-amino-acid chain; its full sequence is uncharacterized protein (163 aa).

The N-acetyltransferase domain maps to 7–162 (ISISAVKLPQ…NVVYMRLEMS (156 aa)).

The protein belongs to the acetyltransferase family.

It localises to the cytoplasm. The protein localises to the nucleus. This is an uncharacterized protein from Schizosaccharomyces pombe (strain 972 / ATCC 24843) (Fission yeast).